The chain runs to 91 residues: ATP synthase epsilon chain (91 aa).

The protein belongs to the ATPase epsilon chain family. F-type ATPases have 2 components, CF(1) - the catalytic core - and CF(0) - the membrane proton channel. CF(1) has five subunits: alpha(3), beta(3), gamma(1), delta(1), epsilon(1). CF(0) has three main subunits: a, b and c.

Its subcellular location is the cell membrane. Produces ATP from ADP in the presence of a proton gradient across the membrane. The polypeptide is ATP synthase epsilon chain (atpC) (Micrococcus luteus (strain ATCC 4698 / DSM 20030 / JCM 1464 / CCM 169 / CCUG 5858 / IAM 1056 / NBRC 3333 / NCIMB 9278 / NCTC 2665 / VKM Ac-2230) (Micrococcus lysodeikticus)).